The following is a 132-amino-acid chain: D-ribose pyranase (132 aa).

Catalysis depends on His20, which acts as the Proton donor. Residues Asp28, His99, and 121-123 contribute to the substrate site; that span reads YSN.

The protein belongs to the RbsD / FucU family. RbsD subfamily. Homodecamer.

The protein localises to the cytoplasm. The catalysed reaction is beta-D-ribopyranose = beta-D-ribofuranose. It participates in carbohydrate metabolism; D-ribose degradation; D-ribose 5-phosphate from beta-D-ribopyranose: step 1/2. Its function is as follows. Catalyzes the interconversion of beta-pyran and beta-furan forms of D-ribose. This Pseudomonas putida (strain W619) protein is D-ribose pyranase.